We begin with the raw amino-acid sequence, 403 residues long: Zinc metalloproteinase nas-8 (403 aa).

A signal peptide spans 1-29 (MRRNDLLNNKITIFLSSLSLFVIIIPIYA). A propeptide spanning residues 30–111 (AEKDLLPPST…DPKNSESLRR (82 aa)) is cleaved from the precursor. A Peptidase M12A domain is found at 112-307 (NGVITGTRKW…LKMNLMYQCS (196 aa)). Intrachain disulfides connect Cys-154–Cys-306, Cys-176–Cys-195, Cys-338–Cys-372, Cys-345–Cys-365, and Cys-352–Cys-369. His-203 is a binding site for Zn(2+). The active site involves Glu-204. Zn(2+)-binding residues include His-207 and His-213. Positions 338–372 (CRDRTNLCWRWIDRCKSFFFEQIMKEFCSLSCGYC) constitute a ShKT domain. Asn-386 is a glycosylation site (N-linked (GlcNAc...) asparagine).

Zn(2+) serves as cofactor.

It localises to the secreted. It catalyses the reaction Hydrolysis of peptide bonds in substrates containing five or more amino acids, preferentially with Ala in P1', and Pro in P2'.. Metalloprotease. This Caenorhabditis elegans protein is Zinc metalloproteinase nas-8 (nas-8).